We begin with the raw amino-acid sequence, 706 residues long: Lysophospholipase 2 (706 aa).

Residues 1 to 19 (MQLRNILQASSLISGLSLA) form the signal peptide. The PLA2c domain occupies 36 to 588 (PCPSDDTSLV…ADYCWNGTLS (553 aa)). N-linked (GlcNAc...) asparagine glycosylation is found at Asn47, Asn80, Asn94, Asn125, Asn162, Asn181, Asn193, Asn217, Asn279, Asn309, Asn365, Asn390, Asn491, Asn515, Asn524, Asn543, Asn567, Asn584, Asn598, Asn630, Asn634, Asn642, Asn648, Asn652, and Asn658. The disordered stretch occupies residues 627-672 (TSGNTTSNSTTSTSSNVTSNSNSSSNTTLNSNSSSSSISSSTARSS). Asn680 carries the GPI-anchor amidated asparagine lipid modification. A propeptide spans 681 to 706 (AAAISYANTNTLMSLLGAITALFGLI) (removed in mature form).

It belongs to the lysophospholipase family. Post-translationally, the GPI-anchor is attached to the protein in the endoplasmic reticulum and serves to target the protein to the cell surface. There, the glucosamine-inositol phospholipid moiety is cleaved off and the GPI-modified mannoprotein is covalently attached via its lipidless GPI glycan remnant to the 1,6-beta-glucan of the outer cell wall layer.

Its subcellular location is the secreted. It localises to the cell wall. The protein localises to the membrane. It carries out the reaction a 1-acyl-sn-glycero-3-phosphocholine + H2O = sn-glycerol 3-phosphocholine + a fatty acid + H(+). The enzyme catalyses 1-hexadecanoyl-sn-glycero-3-phosphoethanolamine + H2O = sn-glycero-3-phosphoethanolamine + hexadecanoate + H(+). It catalyses the reaction 1-hexadecanoyl-sn-glycero-3-phosphocholine + H2O = sn-glycerol 3-phosphocholine + hexadecanoate + H(+). The catalysed reaction is 1-hexadecanoyl-sn-glycero-3-phospho-L-serine + H2O = sn-glycero-3-phospho-L-serine + hexadecanoate + H(+). It carries out the reaction 1,2-dihexadecanoyl-sn-glycero-3-phosphocholine + H2O = 1-hexadecanoyl-sn-glycero-3-phosphocholine + hexadecanoate + H(+). Sequentially removes both fatty acyl groups from diacylglycerophospholipids and therefore has both phospholipase A and lysophospholipase activities. However, it does not display transacylase activity. Substrate preference is phosphatidylserine &gt; phosphatidylinositol &gt; phosphatidylcholine &gt; phosphatidylethanolamine. The substrate specificity is pH- and ion-dependent. In contrast with activities observed at optimum pH 3.5, the order of substrate preference at pH 5.5 is phosphatidylserine = phosphatidylethanolamine &gt; phosphatidylcholine &gt; phosphatidylinositol. This chain is Lysophospholipase 2 (PLB2), found in Saccharomyces cerevisiae (strain ATCC 204508 / S288c) (Baker's yeast).